Reading from the N-terminus, the 158-residue chain is Complexin-3 (158 aa).

A disordered region spans residues 14–47 (KNLTGSLGGGEDKGDGDKSAAEAQGMSREEYEEY). The segment covering 23–33 (GEDKGDGDKSA) has biased composition (basic and acidic residues). A coiled-coil region spans residues 39-74 (MSREEYEEYQKQLVEEKMERDAQFTQRKAERATLRS). Cys-155 carries the post-translational modification Cysteine methyl ester. Cys-155 carries S-farnesyl cysteine lipidation. Positions 156-158 (HIM) are cleaved as a propeptide — removed in mature form.

The protein belongs to the complexin/synaphin family. In terms of assembly, binds to the SNARE core complex containing SNAP25, VAMP2 and STX1A. Farnesylation mediates presynaptic targeting. As to expression, present in many brain regions, including hippocampus and cerebellum (at protein level). Expressed in the retina (at protein level). Expressed in retinal amacrine cells (at protein level). Expressed in retinal photoreceptor ribbon synapses. Expressed in the retinal inner nuclear layer, at bipolar cells (at protein level). Expressed in cone photoreceptor synaptic terminals (at protein level).

The protein localises to the synapse. The protein resides in the cell membrane. In terms of biological role, complexin that regulates SNARE protein complex-mediated synaptic vesicle fusion. Required for the maintenance of synaptic ultrastructure in the adult retina. Positively regulates synaptic transmission through synaptic vesicle availability and exocytosis of neurotransmitters at photoreceptor ribbon synapses in the retina. Suppresses tonic photoreceptor activity and baseline 'noise' by suppression of Ca(2+) vesicle tonic release and the facilitation of evoked synchronous and asynchronous Ca(2+) vesicle release. The protein is Complexin-3 (Cplx3) of Mus musculus (Mouse).